The chain runs to 437 residues: Adenylosuccinate synthetase (437 aa).

Residues 12-18 (GDEGKGK) and 40-42 (GHT) each bind GTP. Asp-13 serves as the catalytic Proton acceptor. Positions 13 and 40 each coordinate Mg(2+). IMP-binding positions include 13 to 16 (DEGK), 38 to 41 (NAGH), Thr-128, Arg-142, Gln-223, Thr-238, and Arg-302. The active-site Proton donor is the His-41. The segment at 119–138 (QRGERRIGTTGRGIGPTYAD) is disordered. 298 to 304 (TTTGRRR) contacts substrate. Residues Arg-304, 330–332 (KLD), and 412–414 (SLG) contribute to the GTP site.

The protein belongs to the adenylosuccinate synthetase family. Homodimer. Requires Mg(2+) as cofactor.

It localises to the cytoplasm. It carries out the reaction IMP + L-aspartate + GTP = N(6)-(1,2-dicarboxyethyl)-AMP + GDP + phosphate + 2 H(+). It functions in the pathway purine metabolism; AMP biosynthesis via de novo pathway; AMP from IMP: step 1/2. In terms of biological role, plays an important role in the de novo pathway of purine nucleotide biosynthesis. Catalyzes the first committed step in the biosynthesis of AMP from IMP. This chain is Adenylosuccinate synthetase, found in Synechococcus sp. (strain WH7803).